A 163-amino-acid polypeptide reads, in one-letter code: MRRILSVLLENESGALSRVIGLFSQRGYNIESLTVAPTDDPTLSRMTIQTVGDEKVLEQIEKQLHKLVDVLRVSELGQGAHVEREIMLVKIQASGYGRDEVKRNTEIFRGQIIDVTPSLYTVQLAGTSGKLDAFLASIRDVAKIVEVARSGVVGLSRGDKIMR.

The region spanning 4 to 78 (ILSVLLENES…DVLRVSELGQ (75 aa)) is the ACT domain.

This sequence belongs to the acetolactate synthase small subunit family. In terms of assembly, dimer of large and small chains.

It catalyses the reaction 2 pyruvate + H(+) = (2S)-2-acetolactate + CO2. The protein operates within amino-acid biosynthesis; L-isoleucine biosynthesis; L-isoleucine from 2-oxobutanoate: step 1/4. It participates in amino-acid biosynthesis; L-valine biosynthesis; L-valine from pyruvate: step 1/4. With respect to regulation, sensitive to valine inhibition. This chain is Acetolactate synthase isozyme 3 small subunit (ilvH), found in Escherichia coli (strain K12).